We begin with the raw amino-acid sequence, 129 residues long: UPF0344 protein MW0851 (129 aa).

A run of 4 helical transmembrane segments spans residues 1 to 21 (MLHL…ATYL), 36 to 56 (LHMI…WILI), 67 to 87 (MLLT…EVSI), and 99 to 119 (MFWI…ILPL).

Belongs to the UPF0344 family.

Its subcellular location is the cell membrane. The polypeptide is UPF0344 protein MW0851 (Staphylococcus aureus (strain MW2)).